The following is a 163-amino-acid chain: Epithelial membrane protein 3 (163 aa).

Residues leucine 4–leucine 24 form a helical membrane-spanning segment. N-linked (GlcNAc...) asparagine glycans are attached at residues asparagine 49 and asparagine 56. Helical transmembrane passes span valine 66–phenylalanine 86, threonine 100–isoleucine 120, and phenylalanine 139–leucine 159.

Belongs to the PMP-22/EMP/MP20 family.

It localises to the membrane. Its function is as follows. Probably involved in cell proliferation and cell-cell interactions. The chain is Epithelial membrane protein 3 (EMP3) from Bos taurus (Bovine).